Consider the following 169-residue polypeptide: Calfumirin-1 (169 aa).

4 consecutive EF-hand domains span residues 6 to 41 (NIVE…KKAF), 42 to 77 (NPER…DKAL), 93 to 128 (EVEE…TGAK), and 129 to 164 (DPEK…VQKL). Asp19, Asn21, Asp23, Glu25, Glu30, Asp55, Asp57, Asp59, Lys61, Glu66, Asp108, Asn110, Asp112, Glu117, Asp142, Asn144, Asp146, Thr148, and Glu153 together coordinate Ca(2+).

In terms of biological role, may be involved in the phase-shift of cells from growth to differentiation. The protein is Calfumirin-1 (cafA) of Dictyostelium discoideum (Social amoeba).